Here is a 95-residue protein sequence, read N- to C-terminus: Co-chaperonin GroES (95 aa).

The tract at residues lysine 20–glutamate 45 is disordered.

The protein belongs to the GroES chaperonin family. As to quaternary structure, heptamer of 7 subunits arranged in a ring. Interacts with the chaperonin GroEL.

The protein resides in the cytoplasm. Functionally, together with the chaperonin GroEL, plays an essential role in assisting protein folding. The GroEL-GroES system forms a nano-cage that allows encapsulation of the non-native substrate proteins and provides a physical environment optimized to promote and accelerate protein folding. GroES binds to the apical surface of the GroEL ring, thereby capping the opening of the GroEL channel. This chain is Co-chaperonin GroES, found in Paracoccus denitrificans.